We begin with the raw amino-acid sequence, 456 residues long: Signal recognition particle 54 kDa protein (456 aa).

Residues 104-111, 184-188, and 242-245 each bind GTP; these read GLYGNGKT, DTSGR, and TKMD.

The protein belongs to the GTP-binding SRP family. SRP54 subfamily. In terms of assembly, part of the signal recognition particle protein translocation system, which is composed of SRP and FtsY. Archaeal SRP consists of a 7S RNA molecule of 300 nucleotides and two protein subunits: SRP54 and SRP19.

The protein localises to the cytoplasm. It carries out the reaction GTP + H2O = GDP + phosphate + H(+). Involved in targeting and insertion of nascent membrane proteins into the cytoplasmic membrane. Binds to the hydrophobic signal sequence of the ribosome-nascent chain (RNC) as it emerges from the ribosomes. The SRP-RNC complex is then targeted to the cytoplasmic membrane where it interacts with the SRP receptor FtsY. In Thermoplasma acidophilum (strain ATCC 25905 / DSM 1728 / JCM 9062 / NBRC 15155 / AMRC-C165), this protein is Signal recognition particle 54 kDa protein.